Here is a 168-residue protein sequence, read N- to C-terminus: Co-chaperone protein HscB homolog (168 aa).

One can recognise a J domain in the interval 5–77; the sequence is DYFSLFGLPS…MLRARYLCES (73 aa).

This sequence belongs to the HscB family. Interacts with HscA and stimulates its ATPase activity.

Co-chaperone involved in the maturation of iron-sulfur cluster-containing proteins. Seems to help targeting proteins to be folded toward HscA. In Bordetella avium (strain 197N), this protein is Co-chaperone protein HscB homolog.